We begin with the raw amino-acid sequence, 504 residues long: Sodium-coupled neutral amino acid transporter 3 (504 aa).

Serine 52 carries the post-translational modification Phosphoserine; by PKC. N-linked (GlcNAc...) asparagine glycosylation is present at asparagine 73. Helical transmembrane passes span 82-102 (GILGLAYAMANTGIILFLFLL), 105-125 (VALLSSYSIHLLLKSSGIVGI), 143-163 (AAALAITLQNIGAMSSYLYII), 186-206 (MDGNYLVILVSVIIILPLALM), and 212-232 (LGYSSGFSLSCMVFFLIAVIY). Cysteines 239 and 275 form a disulfide. Residues asparagine 247 and asparagine 251 are each glycosylated (N-linked (GlcNAc...) asparagine). Residues 287–307 (AYTIPIMAFAFVCHPEVLPIY) form a helical membrane-spanning segment. Residue asparagine 323 is glycosylated (N-linked (GlcNAc...) asparagine). Helical transmembrane passes span 324 to 344 (LSIAVMYVMYFLAALFGYLTF), 366 to 386 (ILCVRVAVLIAVTLTVPIVLF), 408 to 428 (VLIATGLLTCINLLVIFAPNI), 431 to 451 (IFGIIGATSAPCLIFIFPAIF), and 469 to 489 (ILALCFAAVGFLLMTMSLSFI).

Belongs to the amino acid/polyamine transporter 2 family. Phosphorylation at Ser-52 induces internalization and sequestration into an intracellular reservoir. During dephosphorylation by protein phosphatases, can recycle back to the plasma membrane and regain activity. Prolonged phosphorylation results in its degradation. As to expression, highly expressed in liver. Expressed in skeletal muscle. Expressed in kidney, heart and brain. Not detected in gut, lung or spleen. Expressed ubiquitously in hepatocytes in liver whereas in kidney expression is restricted to the medulla. Within brain, expressed in glial cells. In the cerebellum, expressed on Bergmann glial fibers in the molecular layer and astrocytes in the granule layer. Expressed in brain kidney and liver (at protein level). In the adult kidney, highly expressed in the outer strip of the outer medulla and medullary rays penetrating into the kidney cortex (at protein level).

It is found in the cell membrane. The protein resides in the basolateral cell membrane. It carries out the reaction L-glutamine(out) + Na(+)(out) + H(+)(in) = L-glutamine(in) + Na(+)(in) + H(+)(out). It catalyses the reaction L-asparagine(out) + Na(+)(out) + H(+)(in) = L-asparagine(in) + Na(+)(in) + H(+)(out). The enzyme catalyses L-histidine(out) + Na(+)(out) + H(+)(in) = L-histidine(in) + Na(+)(in) + H(+)(out). L-glutamine efflux and L-glutamine uptake are regulated by CO2/HCO3(-) through SLC4A4 leading to modulation of cytosolic pH and Na(+)concentration. Symporter that cotransports specific neutral amino acids and sodium ions, coupled to an H(+) antiporter activity. Mainly participates in the glutamate-GABA-glutamine cycle in brain where it transports L-glutamine from astrocytes in the intercellular space for the replenishment of both neurotransmitters glutamate and gamma-aminobutyric acid (GABA) in neurons. Also functions as the major influx transporter in ganglion cells mediating the uptake of glutamine. The transport activity is specific for L-glutamine, L-histidine and L-asparagine. The transport is electroneutral coupled to the cotransport of 1 Na(+) and the antiport of 1 H(+), pH dependent, saturable, Li(+) tolerant and functions in both direction depending on the concentration gradients of its substrates and cotransported ions. Also mediates an amino acid-gated H(+) conductance that is not stoichiometrically coupled to the amino acid transport but which influences the ionic gradients that drive the amino acid transport. In addition, may play a role in nitrogen metabolism, amino acid homeostasis, glucose metabolism and renal ammoniagenesis. This is Sodium-coupled neutral amino acid transporter 3 from Rattus norvegicus (Rat).